The following is a 187-amino-acid chain: Mast cell-expressed membrane protein 1 (187 aa).

The Cytoplasmic portion of the chain corresponds to 1–85; the sequence is MEVEEIYKHQ…PCWLYRAILS (85 aa). A disordered region spans residues 49-71; that stretch reads DHAKGGHSRPTSQVPAQCRPPSD. Residues 86–106 traverse the membrane as a helical; Signal-anchor for type II membrane protein segment; sequence LYILLALAFVLCIILSAFIMV. The Extracellular segment spans residues 107-187; it reads KNAEMSKELL…LQKMPQSSPQ (81 aa). Asn-124 carries an N-linked (GlcNAc...) asparagine glycan.

Expressed specifically in mast cells. Found primarily in lung.

It is found in the membrane. This chain is Mast cell-expressed membrane protein 1, found in Homo sapiens (Human).